A 100-amino-acid chain; its full sequence is MGFNNLVSLAALIEKVFPIRYTPAGIPVLDIILKHESWQEENGQQCLVQLEIPARILGRQAEEWQYRQGVYVHVEGFLAQKSRRSLMPMLRIQNIQEYKG.

Positions 1 to 99 constitute an SSB domain; that stretch reads MGFNNLVSLA…LRIQNIQEYK (99 aa).

This sequence belongs to the PriB family. Homodimer. Interacts with PriA and DnaT. Component of the replication restart primosome. Primosome assembly occurs via a 'hand-off' mechanism. PriA binds to replication forks, subsequently PriB then DnaT bind; DnaT then displaces ssDNA to generate the helicase loading substrate.

In terms of biological role, involved in the restart of stalled replication forks, which reloads the replicative helicase on sites other than the origin of replication; the PriA-PriB pathway is the major replication restart pathway. During primosome assembly it facilitates complex formation between PriA and DnaT on DNA; stabilizes PriA on DNA. Stimulates the DNA unwinding activity of PriA helicase. The protein is Replication restart protein PriB of Neisseria meningitidis serogroup B (strain ATCC BAA-335 / MC58).